We begin with the raw amino-acid sequence, 237 residues long: Beta-glucanase (237 aa).

The N-terminal stretch at 1 to 23 (MKKKSCFTLVTTFAFSLIFSVSA) is a signal peptide. Residues 28–237 (VFWEPLSYFN…EYDWVKYTSN (210 aa)) enclose the GH16 domain. C55 and C84 are joined by a disulfide. The Nucleophile role is filled by E128. The active-site Proton donor is E132.

It belongs to the glycosyl hydrolase 16 family.

The catalysed reaction is Hydrolysis of (1-&gt;4)-beta-D-glucosidic linkages in beta-D-glucans containing (1-&gt;3)- and (1-&gt;4)-bonds.. The protein is Beta-glucanase of Paenibacillus macerans (Bacillus macerans).